Here is a 156-residue protein sequence, read N- to C-terminus: Transmembrane protein 50 homolog (156 aa).

The next 4 helical transmembrane spans lie at isoleucine 5–isoleucine 25, isoleucine 45–isoleucine 65, valine 87–methionine 107, and proline 124–phenylalanine 144.

It belongs to the UPF0220 family.

It localises to the membrane. The chain is Transmembrane protein 50 homolog (tmem50) from Dictyostelium discoideum (Social amoeba).